The primary structure comprises 206 residues: Inactive ribonuclease-like protein 9 (206 aa).

The N-terminal stretch at 1–26 (MMRTLITTHSLLLFLLLLQLLQPLQF) is a signal peptide. 3 disulfide bridges follow: C99/C154, C117/C169, and C124/C131. N-linked (GlcNAc...) asparagine glycosylation occurs at N132.

The protein belongs to the pancreatic ribonuclease family.

The protein resides in the secreted. Does not exhibit any ribonuclease activity. The sequence is that of Inactive ribonuclease-like protein 9 (RNASE9) from Saimiri boliviensis boliviensis (Bolivian squirrel monkey).